The primary structure comprises 496 residues: Docking protein 3 (496 aa).

Residues 18-38 (LSLDGGTGSGQKGKCEEFPSS) form a disordered region. One can recognise a PH domain in the interval 63–179 (PIKDGILYQQ…WMGPICQLAF (117 aa)). Position 194 is a phosphoserine (Ser-194). Residues 213-317 (EVGEFPVVVQ…ARQRERLPEL (105 aa)) form the IRS-type PTB domain. The tract at residues 313 to 363 (RLPELTRPQPCPLPRATSLPSLDTPGELREMPPGPEPPTSRKMHLAEPGPQ) is disordered. A phosphoserine mark is found at Ser-330 and Ser-364. At Tyr-381 the chain carries Phosphotyrosine. The interval 408 to 447 (PTLHGGEPEPHEGPGSRSPTTSPIYHNGQDLSWPGPANDS) is disordered. The residue at position 425 (Ser-425) is a Phosphoserine.

The protein belongs to the DOK family. Type A subfamily. As to quaternary structure, on tyrosine phosphorylation, interacts with CSK and INPP5D/SHIP1 via their SH2 domains. Both Tyr-381 and Tyr-398 are required for interaction with INPP5D. Only Tyr-381 is required for interaction with CSK. Binds ABL1 through the PTB domain and in a kinase-dependent manner. Does not interact with RasGAP. Constitutively tyrosine-phosphorylated. Post-translationally, on IL2 stimulation, phosphorylated on C-terminal tyrosine residues possibly by Src kinases. Can also be phosphorylated by ABL1 kinase. Expressed in spleen.

The protein localises to the cytoplasm. The protein resides in the cell membrane. DOK proteins are enzymatically inert adaptor or scaffolding proteins. They provide a docking platform for the assembly of multimolecular signaling complexes. DOK3 is a negative regulator of JNK signaling in B-cells through interaction with INPP5D/SHIP1. May modulate ABL1 function. The polypeptide is Docking protein 3 (DOK3) (Homo sapiens (Human)).